The primary structure comprises 147 residues: Large ribosomal subunit protein uL13 (147 aa).

It belongs to the universal ribosomal protein uL13 family. As to quaternary structure, part of the 50S ribosomal subunit.

In terms of biological role, this protein is one of the early assembly proteins of the 50S ribosomal subunit, although it is not seen to bind rRNA by itself. It is important during the early stages of 50S assembly. In Rhodococcus erythropolis (strain PR4 / NBRC 100887), this protein is Large ribosomal subunit protein uL13.